A 249-amino-acid polypeptide reads, in one-letter code: Proteasome activator complex subunit 1 (249 aa).

The disordered stretch occupies residues 55–102 (SNLKAPLDIPVPDPVKEKEKEERRKQQEKEDKDEKKKGEDEDKGPPCG). A compositionally biased stretch (basic and acidic residues) spans 68 to 98 (PVKEKEKEERRKQQEKEDKDEKKKGEDEDKG).

The protein belongs to the PA28 family. As to quaternary structure, heterodimer of PSME1 and PSME2, which forms a hexameric ring. PSME1 can form homoheptamers.

In terms of biological role, implicated in immunoproteasome assembly and required for efficient antigen processing. The PA28 activator complex enhances the generation of class I binding peptides by altering the cleavage pattern of the proteasome. The polypeptide is Proteasome activator complex subunit 1 (PSME1) (Bos taurus (Bovine)).